Reading from the N-terminus, the 317-residue chain is Methionyl-tRNA formyltransferase (317 aa).

109-112 provides a ligand contact to (6S)-5,6,7,8-tetrahydrofolate; sequence SLLP.

This sequence belongs to the Fmt family.

The catalysed reaction is L-methionyl-tRNA(fMet) + (6R)-10-formyltetrahydrofolate = N-formyl-L-methionyl-tRNA(fMet) + (6S)-5,6,7,8-tetrahydrofolate + H(+). Functionally, attaches a formyl group to the free amino group of methionyl-tRNA(fMet). The formyl group appears to play a dual role in the initiator identity of N-formylmethionyl-tRNA by promoting its recognition by IF2 and preventing the misappropriation of this tRNA by the elongation apparatus. This is Methionyl-tRNA formyltransferase from Halalkalibacterium halodurans (strain ATCC BAA-125 / DSM 18197 / FERM 7344 / JCM 9153 / C-125) (Bacillus halodurans).